We begin with the raw amino-acid sequence, 207 residues long: 2,3-bisphosphoglycerate-dependent phosphoglycerate mutase (207 aa).

Residues R10 to N17, T23 to G24, R62, E89 to Y92, K100, R116 to R117, and G160 to N161 each bind substrate. The active-site Tele-phosphohistidine intermediate is the H11. The active-site Proton donor/acceptor is the E89.

The protein belongs to the phosphoglycerate mutase family. BPG-dependent PGAM subfamily. As to quaternary structure, homodimer.

The catalysed reaction is (2R)-2-phosphoglycerate = (2R)-3-phosphoglycerate. It functions in the pathway carbohydrate degradation; glycolysis; pyruvate from D-glyceraldehyde 3-phosphate: step 3/5. Its function is as follows. Catalyzes the interconversion of 2-phosphoglycerate and 3-phosphoglycerate. This is 2,3-bisphosphoglycerate-dependent phosphoglycerate mutase from Bradyrhizobium sp. (strain BTAi1 / ATCC BAA-1182).